We begin with the raw amino-acid sequence, 610 residues long: Oxidoreductase ptaE (610 aa).

An N-terminal signal peptide occupies residues 1 to 20 (MFQSILFLAFYGRPVFGSAA). 2 consecutive Plastocyanin-like domains span residues 67–181 (QIIS…HGPS) and 191–344 (PWLL…IVRY). Asparagine 105, asparagine 111, asparagine 262, asparagine 277, asparagine 330, asparagine 356, asparagine 401, asparagine 409, asparagine 427, and asparagine 602 each carry an N-linked (GlcNAc...) asparagine glycan. The Plastocyanin-like 3 domain occupies 425–568 (YVNWSEPSVK…IAIQFLEQPS (144 aa)).

This sequence belongs to the multicopper oxidase family.

The protein operates within secondary metabolite biosynthesis. Oxidoreductase; part of the gene cluster that mediates the biosynthesis of pestheic acid, a diphenyl ether which is a biosynthetic precursor of the unique chloropupukeananes. The biosynthesis initiates from condensation of acetate and malonate units catalyzed by the non-reducing PKS ptaA. As the ptaA protein is TE/CLC domain-deficient, hydrolysis and Claisen cyclization of the polyketide could be catalyzed by ptaB containing a beta-lactamase domain. The ptaB protein might hydrolyze the thioester bond between the ACP of ptaA and the intermediate to release atrochrysone carboxylic acid, which is spontaneously dehydrated to form endocrocin anthrone. Endocrocin anthrone is then converted to endocrocin, catalyzed by the anthrone oxygenase ptaC. Spontaneous decarboxylation of endocrocin occurs to generate emodin. An O-methyltransferase (ptaH or ptaI) could methylate emodin to form physcion. PtaJ could then catalyze the oxidative cleavage of physcion, and rotation of the intermediate could then afford desmethylisosulochrin. PtaF, a putative NADH-dependent oxidoreductase, might also participate in the oxidative cleavage step. Desmethylisosulochrin is then transformed by another O-methyltransferase (ptaH or ptaI) to form isosulochrin. Chlorination of isosulochrin by ptaM in the cyclohexadienone B ring then produces chloroisosulochrin. PtaE is responsible for the oxidative coupling reactions of both benzophenones isosulouchrin and chloroisosulochrin to RES-1214-1 and pestheic acid respectively, regardless of chlorination. The polypeptide is Oxidoreductase ptaE (Pestalotiopsis fici (strain W106-1 / CGMCC3.15140)).